Here is a 546-residue protein sequence, read N- to C-terminus: Probable protein kinase UbiB (546 aa).

The Protein kinase domain occupies 124 to 502 (DFEIKPLASA…HVRQGQSRYF (379 aa)). Residues 130-138 (LASASIAQV) and K153 each bind ATP. The active-site Proton acceptor is D288. Transmembrane regions (helical) follow at residues 501–521 (YFLG…VSRP) and 522–542 (EWGL…FVGW).

Belongs to the ABC1 family. UbiB subfamily.

It is found in the cell inner membrane. It participates in cofactor biosynthesis; ubiquinone biosynthesis [regulation]. Is probably a protein kinase regulator of UbiI activity which is involved in aerobic coenzyme Q (ubiquinone) biosynthesis. In Escherichia coli (strain SMS-3-5 / SECEC), this protein is Probable protein kinase UbiB.